The sequence spans 507 residues: Tryptophan aminotransferase-related protein 2 (507 aa).

A disordered region spans residues 91 to 135 (PPPHHHHHDAGLATRSSDAAVHRRARTASSMAPSTGKPAVTTDSV). Pyridoxal 5'-phosphate-binding positions include tyrosine 169, 211-212 (ST), asparagine 282, 304-307 (DLAY), 327-330 (TVSK), and arginine 338. Lysine 330 is modified (N6-(pyridoxal phosphate)lysine).

It belongs to the alliinase family. It depends on pyridoxal 5'-phosphate as a cofactor. As to expression, widely expressed.

It carries out the reaction L-tryptophan + 2-oxoglutarate = indole-3-pyruvate + L-glutamate. Its pathway is plant hormone metabolism; auxin biosynthesis. Functionally, probable tryptophan aminotransferase involved in auxin (IAA) biosynthesis. Required for auxin production to initiate multiple change in growth in response to environmental and developmental cues. Functions upstream of YUCCA1 in auxin biosynthesis. Required for polar auxin transport. In Oryza sativa subsp. japonica (Rice), this protein is Tryptophan aminotransferase-related protein 2.